A 288-amino-acid polypeptide reads, in one-letter code: Aquaporin PIP2-4 (288 aa).

The segment at 1-24 (MAKDIEASGPEAGEFSAKDYTDPP) is disordered. 2 consecutive transmembrane segments (helical) span residues 42–62 (AVIAEFIATLLFLYITVATVI) and 79–99 (CGGVGILGIAWAFGGMIFILV). The NPA 1 motif lies at 111 to 113 (NPA). The next 3 membrane-spanning stretches (helical) occupy residues 130 to 150 (LLYIIAQCLGAICGVGLVKGF), 172 to 192 (GTGLAAEIIGTFVLVYTVFSA), and 206 to 226 (VLAPLPIGFAVFMVHLATIPI). Positions 232–234 (NPA) match the NPA 2 motif. The helical transmembrane segment at 254-274 (IFWVGPLIGAAIAAAYHQYVL) threads the bilayer.

It belongs to the MIP/aquaporin (TC 1.A.8) family. PIP (TC 1.A.8.11) subfamily. As to quaternary structure, homomers. May interact with PIP1-2 to form heteromers. Expressed in the root growing zone at 5-6 mm from the root tip.

It localises to the cell membrane. Water channel required to facilitate the transport of water across cell membrane. Active as homomers. Increased activity when heteromerization with PIP1-2. The protein is Aquaporin PIP2-4 (PIP2-4) of Zea mays (Maize).